Consider the following 135-residue polypeptide: Small ribosomal subunit protein uS8 (135 aa).

It belongs to the universal ribosomal protein uS8 family. Part of the 30S ribosomal subunit. Contacts proteins S5 and S12.

In terms of biological role, one of the primary rRNA binding proteins, it binds directly to 16S rRNA central domain where it helps coordinate assembly of the platform of the 30S subunit. This Parafrankia sp. (strain EAN1pec) protein is Small ribosomal subunit protein uS8.